A 362-amino-acid polypeptide reads, in one-letter code: MKIDTGFYSKTITPTYDSDAIDRLRYYFTVFLLTSSAFFIMAKQYVGQSIQCWAPKQFKGGWEEYAESYCLIENTYYVHMNNSNLPGPAIRENKELKYYQWVPFILFGLAVVIYIPRVIWNALQSLIGINISIVTSNLRKVAKSGFTSENPDIEKKKKEMQCKKKATSRQVDGEFWGSRLTTCILATKFLATILIFISMGFLDYFMGLGPMYGWTITKDILQGRQWQESGSFPRVTFCDFQVRELGYVNNWSLQCVLMVNMFNEKLFIALWWWYALLAILSIFDIFRVLFRFTIHHQISFITRILACTGDSAISATEVGEFNRKVLRIDGINLTHLVYANATIFEAADFVRPMWEQFKENQN.

A run of 4 helical transmembrane segments spans residues 27–47 (YFTV…QYVG), 101–121 (WVPF…VIWN), 189–209 (FLAT…MGLG), and 266–286 (LFIA…FDIF).

This sequence belongs to the pannexin family.

The protein localises to the cell membrane. The protein resides in the cell junction. It is found in the gap junction. Structural component of the gap junctions. The protein is Innexin-17 of Caenorhabditis elegans.